Consider the following 406-residue polypeptide: Glycosyltransferase GlyE (406 aa).

Residues 3–265 (NTKRAVVFAG…SVILNEWFSK (263 aa)) are GT8 domain. Residues 11-16 (AGDYAY) and 106-107 (DS) contribute to the UDP site. The Mn(2+) site is built by Asp106, Asp108, and His227. UDP is bound at residue 227-233 (HYISQDK).

It in the N-terminal section; belongs to the glycosyltransferase 8 family. The cofactor is Mn(2+).

It functions in the pathway protein modification; protein glycosylation. Its function is as follows. Involved in the polymorphic O-glycosylation of the serine-rich repeat protein PsrP. Catalyzes the third step in glycosylation of PsrP in this bacteria. Transfers galactose from UDP-galactose to the terminal glucose moiety of already-glycosylated PsrP (using the short substrate PsrP-GlcNAc-Glc). Has a very marked preference for PsrP substrate that has already been modified by GlcNAc and glucose. Has hydrolytic activity against UDP-galactose but none against UDP-glucose. Also catalyzes the fourth step in glycosylation of PsrP in this bacteria. Can transfer the sugar from UDP-galactose to the terminal sugar moiety of PsrP-GlcNAc-Glc-Glc and of PsrP-GlcNAc-Glc-Gal. The chain is Glycosyltransferase GlyE from Streptococcus pneumoniae serotype 4 (strain ATCC BAA-334 / TIGR4).